We begin with the raw amino-acid sequence, 563 residues long: Phosphomethylpyrimidine synthase (563 aa).

The tract at residues 95 to 115 (PGKNPSPMNNRTPVRAKQGKS) is disordered. Substrate is bound by residues N200, M229, Y258, H294, 314 to 316 (SRG), 355 to 358 (DALR), and E394. Zn(2+) is bound at residue H398. Y421 is a binding site for substrate. Position 462 (H462) interacts with Zn(2+). Residues C544, C547, and C552 each contribute to the [4Fe-4S] cluster site.

It belongs to the ThiC family. [4Fe-4S] cluster serves as cofactor.

The enzyme catalyses 5-amino-1-(5-phospho-beta-D-ribosyl)imidazole + S-adenosyl-L-methionine = 4-amino-2-methyl-5-(phosphooxymethyl)pyrimidine + CO + 5'-deoxyadenosine + formate + L-methionine + 3 H(+). It functions in the pathway cofactor biosynthesis; thiamine diphosphate biosynthesis. Its function is as follows. Catalyzes the synthesis of the hydroxymethylpyrimidine phosphate (HMP-P) moiety of thiamine from aminoimidazole ribotide (AIR) in a radical S-adenosyl-L-methionine (SAM)-dependent reaction. This is Phosphomethylpyrimidine synthase from Chlorobium phaeobacteroides (strain BS1).